Reading from the N-terminus, the 299-residue chain is NmrA-like family domain-containing protein 1 (299 aa).

NADP(+) contacts are provided by residues 11–16 (GGTGAQ), 37–41 (RNPRK), 58–59 (DQ), Gln62, 79–81 (TNY), Lys92, Lys133, and 155–158 (YFEN). Positions 153–189 (PCYFENLLSHFLPQKAPDGKSYLLSLPTGDVPMDGMS) are interaction with ASS1.

This sequence belongs to the NmrA-type oxidoreductase family. In terms of assembly, homodimer. Interacts with ASS1. Interaction is enhanced by low NADPH/NADP(+) ratios, which results in inhibition of ASS1 activity.

Its subcellular location is the cytoplasm. It is found in the perinuclear region. The protein resides in the nucleus. Its function is as follows. Redox sensor protein. Undergoes restructuring and subcellular redistribution in response to changes in intracellular NADPH/NADP(+) levels. At low NADPH concentrations the protein is found mainly as a monomer, and binds argininosuccinate synthase (ASS1), the enzyme involved in nitric oxide synthesis. Association with ASS1 impairs its activity and reduces the production of nitric oxide, which subsecuently prevents apoptosis. Under normal NADPH concentrations, the protein is found as a dimer and hides the binding site for ASS1. The homodimer binds one molecule of NADPH. Has higher affinity for NADPH than for NADP(+). Binding to NADPH is necessary to form a stable dimer. The polypeptide is NmrA-like family domain-containing protein 1 (NMRAL1) (Homo sapiens (Human)).